The primary structure comprises 306 residues: MLKGKSLLTLLDFSNYEIESIINLSFSMKSFVNLNSVPKTLENKKIALIFEKPSTRTRISTELAVKLLGGTSIVLSKSDIQLGRGETVEDTARVLGRYVDGIGARVLNHNSLEILSKYSRKPVINLLSDVSHPLQALTDFMTVKERFGTYTNMAFIGDGTDNVLTSLMEFVSKMGLELRVASPKEFRPKQEVWRRIEEESEKSGAIIEFYEDPYEAVRGVKVVYTDVWVSMGQESIAEEKKKKLKDYKVTRDLMRYASKDAIFMHCLPAVRGEEVEDDVIDGHQSAVWDQAENRLYTAMAVLSLFI.

Residues 54–57, Q81, R105, and 132–135 each bind carbamoyl phosphate; these read STRT and HPLQ. L-ornithine is bound by residues N162, D226, and 230-231; that span reads SM. Residues 266–267 and R294 contribute to the carbamoyl phosphate site; that span reads CL.

This sequence belongs to the aspartate/ornithine carbamoyltransferase superfamily. OTCase family.

Its subcellular location is the cytoplasm. It carries out the reaction carbamoyl phosphate + L-ornithine = L-citrulline + phosphate + H(+). It functions in the pathway amino-acid biosynthesis; L-arginine biosynthesis; L-arginine from L-ornithine and carbamoyl phosphate: step 1/3. Functionally, reversibly catalyzes the transfer of the carbamoyl group from carbamoyl phosphate (CP) to the N(epsilon) atom of ornithine (ORN) to produce L-citrulline. The protein is Ornithine carbamoyltransferase of Sulfolobus acidocaldarius (strain ATCC 33909 / DSM 639 / JCM 8929 / NBRC 15157 / NCIMB 11770).